A 360-amino-acid chain; its full sequence is Protein Wnt-2 (360 aa).

The signal sequence occupies residues 1–25 (MNAPLAGIWPWLPLLLTWLAPEVSS). 11 disulfides stabilise this stretch: Cys-76–Cys-87, Cys-127–Cys-135, Cys-137–Cys-157, Cys-206–Cys-220, Cys-208–Cys-215, Cys-278–Cys-309, Cys-294–Cys-304, Cys-308–Cys-348, Cys-324–Cys-339, Cys-326–Cys-336, and Cys-331–Cys-332. Ser-212 carries the O-palmitoleoyl serine; by PORCN lipid modification. Asn-295 is a glycosylation site (N-linked (GlcNAc...) asparagine).

It belongs to the Wnt family. Post-translationally, palmitoleoylation is required for efficient binding to frizzled receptors. Depalmitoleoylation leads to Wnt signaling pathway inhibition.

The protein localises to the secreted. It localises to the extracellular space. It is found in the extracellular matrix. Its function is as follows. Ligand for members of the frizzled family of seven transmembrane receptors. Functions in the canonical Wnt signaling pathway that results in activation of transcription factors of the TCF/LEF family. Functions as a upstream regulator of FGF10 expression. Plays an important role in embryonic lung development. May contribute to embryonic brain development by regulating the proliferation of dopaminergic precursors and neurons. The protein is Protein Wnt-2 (WNT2) of Loxodonta africana (African elephant).